We begin with the raw amino-acid sequence, 72 residues long: Translation initiation factor IF-1 (72 aa).

The 72-residue stretch at 1–72 folds into the S1-like domain; it reads MSKDDVIEMQ…TRGRITWRAK (72 aa).

It belongs to the IF-1 family. As to quaternary structure, component of the 30S ribosomal translation pre-initiation complex which assembles on the 30S ribosome in the order IF-2 and IF-3, IF-1 and N-formylmethionyl-tRNA(fMet); mRNA recruitment can occur at any time during PIC assembly.

The protein resides in the cytoplasm. In terms of biological role, one of the essential components for the initiation of protein synthesis. Stabilizes the binding of IF-2 and IF-3 on the 30S subunit to which N-formylmethionyl-tRNA(fMet) subsequently binds. Helps modulate mRNA selection, yielding the 30S pre-initiation complex (PIC). Upon addition of the 50S ribosomal subunit IF-1, IF-2 and IF-3 are released leaving the mature 70S translation initiation complex. The polypeptide is Translation initiation factor IF-1 (Clostridium beijerinckii (strain ATCC 51743 / NCIMB 8052) (Clostridium acetobutylicum)).